The primary structure comprises 261 residues: GTP cyclohydrolase FolE2 (261 aa).

Belongs to the GTP cyclohydrolase IV family.

It carries out the reaction GTP + H2O = 7,8-dihydroneopterin 3'-triphosphate + formate + H(+). The protein operates within cofactor biosynthesis; 7,8-dihydroneopterin triphosphate biosynthesis; 7,8-dihydroneopterin triphosphate from GTP: step 1/1. Its function is as follows. Converts GTP to 7,8-dihydroneopterin triphosphate. This Herminiimonas arsenicoxydans protein is GTP cyclohydrolase FolE2.